The following is a 245-amino-acid chain: Probable membrane transporter protein YdhB (245 aa).

Transmembrane regions (helical) follow at residues 1–21, 34–56, 71–91, 98–118, 137–157, 177–197, 199–219, and 225–245; these read MLIILVMFLLGIILGFIGAGG, HIPIHTALGTSLAGMAFTSLSGA, LIVGGFAAVGSFFGAKLTSFI, YLTAGMLFLSAILILIRLFIL, ILGIAAGVLSGTFGIGSAPFI, MLVIIPLAVGGGIGYITEGFV, YVLLVKVLVGTMCGAYVGAKF, and KVVLKSAIFLTPAIAGLLLLF.

The protein belongs to the 4-toluene sulfonate uptake permease (TSUP) (TC 2.A.102) family.

The protein resides in the cell membrane. This is Probable membrane transporter protein YdhB (ydhB) from Bacillus subtilis (strain 168).